Here is a 511-residue protein sequence, read N- to C-terminus: GMP synthase [glutamine-hydrolyzing] (511 aa).

The region spanning 5–195 is the Glutamine amidotransferase type-1 domain; sequence DILVLDFGSQ…AKYACNCDSV (191 aa). The active-site Nucleophile is Cys82. Active-site residues include His169 and Glu171. In terms of domain architecture, GMPS ATP-PPase spans 196–386; that stretch reads WNMGSFAKTQ…LGLSKDVVYR (191 aa). Residue 223 to 229 participates in ATP binding; it reads SGGVDSS.

In terms of assembly, homodimer.

It carries out the reaction XMP + L-glutamine + ATP + H2O = GMP + L-glutamate + AMP + diphosphate + 2 H(+). It functions in the pathway purine metabolism; GMP biosynthesis; GMP from XMP (L-Gln route): step 1/1. Functionally, catalyzes the synthesis of GMP from XMP. This chain is GMP synthase [glutamine-hydrolyzing], found in Campylobacter lari (strain RM2100 / D67 / ATCC BAA-1060).